The chain runs to 138 residues: Glutathione S-transferase Mu 5 (138 aa).

Ser1 carries the phosphoserine modification. Residues 1–71 form the GST N-terminal domain; sequence SMVLGYWDIR…KITQSNAILR (71 aa). Glutathione contacts are provided by residues 6–7, 39–43, 52–53, and 65–66; these read YW, WLDVK, NL, and QS. A GST C-terminal domain is found at 72-135; sequence IRVDIMENQI…FMCRCFKMPI (64 aa).

Belongs to the GST superfamily. Mu family. As to quaternary structure, homodimer.

It localises to the cytoplasm. The enzyme catalyses RX + glutathione = an S-substituted glutathione + a halide anion + H(+). Its function is as follows. Conjugation of reduced glutathione to a wide number of exogenous and endogenous hydrophobic electrophiles. The polypeptide is Glutathione S-transferase Mu 5 (Mesocricetus auratus (Golden hamster)).